The primary structure comprises 253 residues: 3-deoxy-manno-octulosonate cytidylyltransferase (253 aa).

This sequence belongs to the KdsB family.

It localises to the cytoplasm. It catalyses the reaction 3-deoxy-alpha-D-manno-oct-2-ulosonate + CTP = CMP-3-deoxy-beta-D-manno-octulosonate + diphosphate. It participates in nucleotide-sugar biosynthesis; CMP-3-deoxy-D-manno-octulosonate biosynthesis; CMP-3-deoxy-D-manno-octulosonate from 3-deoxy-D-manno-octulosonate and CTP: step 1/1. It functions in the pathway bacterial outer membrane biogenesis; lipopolysaccharide biosynthesis. Its function is as follows. Activates KDO (a required 8-carbon sugar) for incorporation into bacterial lipopolysaccharide in Gram-negative bacteria. The chain is 3-deoxy-manno-octulosonate cytidylyltransferase from Aeromonas hydrophila subsp. hydrophila (strain ATCC 7966 / DSM 30187 / BCRC 13018 / CCUG 14551 / JCM 1027 / KCTC 2358 / NCIMB 9240 / NCTC 8049).